The primary structure comprises 364 residues: Palmitoyltransferase ZDHHC9 (364 aa).

The Cytoplasmic portion of the chain corresponds to 1 to 35 (MSVMVVRKKVTRKWEKLPGRNTFCCDGRVMMARQK). A helical transmembrane segment spans residues 36–56 (GIFYLTLFLILGTCTLFFAFE). Residues 57–63 (CRYLAVQ) lie on the Lumenal side of the membrane. Residues 64–84 (LSPAIPVFAAMLFLFSMATLL) traverse the membrane as a helical segment. The Cytoplasmic segment spans residues 85-183 (RTSFSDPGVI…NCVGKRNYRY (99 aa)). Positions 139–189 (KYCYTCKIFRPPRASHCSICDNCVERFDHHCPWVGNCVGKRNYRYFYLFIL) constitute a DHHC domain. The active-site S-palmitoyl cysteine intermediate is the Cys-169. A helical membrane pass occupies residues 184 to 204 (FYLFILSLSLLTIYVFAFNIV). The Lumenal portion of the chain corresponds to 205–228 (YVALKSLKIGFLETLKETPGTVLE). The helical transmembrane segment at 229–249 (VLICFFTLWSVVGLTGFHTFL) threads the bilayer. Over 250–364 (VALNQTTNED…PPQEASEAEK (115 aa)) the chain is Cytoplasmic. A disordered region spans residues 303 to 364 (PLEESGSRPP…PPQEASEAEK (62 aa)). Residues 310–336 (RPPSTQETSSSLLPQSPASTEHMNSNE) are compositionally biased toward polar residues. Residues 346-356 (EMPPPEPPEPP) show a composition bias toward pro residues.

It belongs to the DHHC palmitoyltransferase family. ERF2/ZDHHC9 subfamily. As to quaternary structure, interacts with GOLGA7.

It is found in the endoplasmic reticulum membrane. The protein localises to the golgi apparatus membrane. It catalyses the reaction L-cysteinyl-[protein] + hexadecanoyl-CoA = S-hexadecanoyl-L-cysteinyl-[protein] + CoA. Its function is as follows. Palmitoyltransferase that catalyzes the addition of palmitate onto various protein substrates, such as ADRB2, GSDMD, HRAS, NRAS and CGAS. The ZDHHC9-GOLGA7 complex is a palmitoyltransferase specific for HRAS and NRAS. May have a palmitoyltransferase activity toward the beta-2 adrenergic receptor/ADRB2 and therefore regulate G protein-coupled receptor signaling. Acts as a regulator of innate immunity by catalyzing palmitoylation of CGAS, thereby promoting CGAS homodimerization and cyclic GMP-AMP synthase activity. Activates pyroptosis by catalyzing palmitoylation of gasdermin-D (GSDMD), thereby promoting membrane translocation and pore formation of GSDMD. This Mus musculus (Mouse) protein is Palmitoyltransferase ZDHHC9 (Zdhhc9).